A 71-amino-acid polypeptide reads, in one-letter code: Long neurotoxin 1 (71 aa).

Disulfide bonds link C3-C20, C14-C41, C26-C30, C45-C56, and C57-C62.

This sequence belongs to the three-finger toxin family. Long-chain subfamily. Type II alpha-neurotoxin sub-subfamily. Expressed by the venom gland.

The protein localises to the secreted. Functionally, binds with high affinity to muscular (alpha-1/CHRNA1) and neuronal (alpha-7/CHRNA7) nicotinic acetylcholine receptor (nAChR) and hinders acetylcholine binding to the receptor, thereby impairing neuromuscular and neuronal transmission. The polypeptide is Long neurotoxin 1 (Naja annulata annulata (Banded water cobra)).